A 244-amino-acid polypeptide reads, in one-letter code: AA9 family lytic polysaccharide monooxygenase B (244 aa).

The first 19 residues, 1-19 (MFLVPLLAALSLSAPKVAA), serve as a signal peptide directing secretion. Residue His20 participates in Cu(2+) binding. Residue Tyr39 coordinates (1,4-beta-D-glucosyl)n. Disulfide bonds link Cys68–Cys189 and Cys111–Cys115. Cu(2+) is bound at residue His99. The N-linked (GlcNAc...) asparagine glycan is linked to Asn152. Residues His178 and Gln184 each coordinate O2. Tyr186 is a binding site for Cu(2+). (1,4-beta-D-glucosyl)n contacts are provided by Asp224, Tyr226, and Glu229. The N-linked (GlcNAc...) asparagine glycan is linked to Asn233.

It belongs to the polysaccharide monooxygenase AA9 family. Cu(2+) serves as cofactor.

The protein resides in the secreted. The enzyme catalyses [(1-&gt;4)-beta-D-glucosyl]n+m + reduced acceptor + O2 = 4-dehydro-beta-D-glucosyl-[(1-&gt;4)-beta-D-glucosyl]n-1 + [(1-&gt;4)-beta-D-glucosyl]m + acceptor + H2O.. Its function is as follows. Lytic polysaccharide monooxygenase (LPMO) that depolymerizes crystalline and amorphous polysaccharides via the oxidation of scissile alpha- or beta-(1-4)-glycosidic bonds, yielding specifically C1 oxidation product. Catalysis by LPMOs requires the reduction of the active-site copper from Cu(II) to Cu(I) by a reducing agent and H(2)O(2) or O(2) as a cosubstrate. Displays catalytic activity on insoluble cellulose using I-beta microfibril model substrate. The protein is AA9 family lytic polysaccharide monooxygenase B of Heterobasidion irregulare (strain TC 32-1).